The sequence spans 153 residues: MVQLLSAFVSLLSVVAVSGAAIPAPAPEAVVDVAPETATIEPTGNFTAQACMYICGSVCYSSSAISAALNKGYSYYEDGATAGSSSYPHRYNNYEGFDFPTAKPWYEFPILSSGRVYTGGSPGADRVIFDSHGNLDMLITHNGASGNNFVACN.

A signal peptide spans 1–20; that stretch reads MVQLLSAFVSLLSVVAVSGA. The propeptide occupies 21 to 49; it reads AIPAPAPEAVVDVAPETATIEPTGNFTAQ. Intrachain disulfides connect Cys-51–Cys-59 and Cys-55–Cys-152. Residue His-89 is part of the active site. Glu-107 (proton acceptor) is an active-site residue. His-141 acts as the Proton donor in catalysis.

The protein belongs to the ribonuclease N1/T1 family.

The enzyme catalyses [RNA] containing guanosine + H2O = an [RNA fragment]-3'-guanosine-3'-phosphate + a 5'-hydroxy-ribonucleotide-3'-[RNA fragment].. The sequence is that of Guanyl-specific ribonuclease N1 (grn) from Neurospora crassa (strain ATCC 24698 / 74-OR23-1A / CBS 708.71 / DSM 1257 / FGSC 987).